The chain runs to 488 residues: Replication-associated protein (488 aa).

Residues 462–488 (PRPRQMQRSATEHNLFQYARSGRDPTS) form a disordered region.

The protein localises to the host nucleus. Functionally, plays an essential for the replication of viral DNA. Presumably cleaves viral genomic dsRNA replicative form to initiate rolling circle replication. This Chaetoceros diatodnavirus 1 (Chaetoceros setoense DNA virus) protein is Replication-associated protein.